The primary structure comprises 235 residues: Lipoprotein-releasing system ATP-binding protein LolD 1 (235 aa).

The region spanning 5-234 (FEARGITKSY…DGRLQLCTPL (230 aa)) is the ABC transporter domain. 42 to 49 (GASGSGKT) serves as a coordination point for ATP.

This sequence belongs to the ABC transporter superfamily. Lipoprotein translocase (TC 3.A.1.125) family. In terms of assembly, the complex is composed of two ATP-binding proteins (LolD) and two transmembrane proteins (LolC and LolE).

It is found in the cell inner membrane. Part of the ABC transporter complex LolCDE involved in the translocation of mature outer membrane-directed lipoproteins, from the inner membrane to the periplasmic chaperone, LolA. Responsible for the formation of the LolA-lipoprotein complex in an ATP-dependent manner. The sequence is that of Lipoprotein-releasing system ATP-binding protein LolD 1 from Chlorobium luteolum (strain DSM 273 / BCRC 81028 / 2530) (Pelodictyon luteolum).